The chain runs to 229 residues: MTLNKTDRIVITLGKQIVHGKYVPGSPLPAEAELCEEFATSRNIIREVFRSLMAKRLIEMKRYRGAFVAPRNQWNYLDTDVLQWVLENDYDPRLISAMSEVRNLVEPAIARWAAERATSSDLAQIESALNEMIANNQDREAFNEADIRYHEAVLQSVHNPVLQQLSIAISSLQRAVFERTWMGDEANMPQTLQEHKALFDAIRHQDGDAAEQAALTMIASSTRRLKEIT.

In terms of domain architecture, HTH gntR-type spans 1-71 (MTLNKTDRIV…RYRGAFVAPR (71 aa)). The segment at residues 31–50 (EAELCEEFATSRNIIREVFR) is a DNA-binding region (H-T-H motif). Zn(2+) contacts are provided by Asp-146, His-150, and His-195.

Homodimer.

D-galactonate binds DgoR and induces a conformational change in the protein, which decreases its affinity for DNA and consequently derepresses transcription of the dgoRKADT operon. In terms of biological role, involved in the regulation of D-galactonate metabolism. Represses the expression of the dgoRKADT operon by binding to two closely spaced inverted repeats in the cis-acting element, which overlap with the D-galactonate responsive dgo promoter. Employs a derepression mechanism using D-galactonate as a specific effector molecule. This is Galactonate operon transcriptional repressor from Escherichia coli (strain K12).